The following is a 95-amino-acid chain: ATP-dependent Clp protease adapter protein ClpS (95 aa).

The protein belongs to the ClpS family. As to quaternary structure, binds to the N-terminal domain of the chaperone ClpA.

Functionally, involved in the modulation of the specificity of the ClpAP-mediated ATP-dependent protein degradation. This is ATP-dependent Clp protease adapter protein ClpS from Synechococcus elongatus (strain ATCC 33912 / PCC 7942 / FACHB-805) (Anacystis nidulans R2).